Here is a 958-residue protein sequence, read N- to C-terminus: Glycine dehydrogenase (decarboxylating) (958 aa).

The residue at position 708 (lysine 708) is an N6-(pyridoxal phosphate)lysine.

It belongs to the GcvP family. In terms of assembly, the glycine cleavage system is composed of four proteins: P, T, L and H. It depends on pyridoxal 5'-phosphate as a cofactor.

The catalysed reaction is N(6)-[(R)-lipoyl]-L-lysyl-[glycine-cleavage complex H protein] + glycine + H(+) = N(6)-[(R)-S(8)-aminomethyldihydrolipoyl]-L-lysyl-[glycine-cleavage complex H protein] + CO2. Functionally, the glycine cleavage system catalyzes the degradation of glycine. The P protein binds the alpha-amino group of glycine through its pyridoxal phosphate cofactor; CO(2) is released and the remaining methylamine moiety is then transferred to the lipoamide cofactor of the H protein. In Photorhabdus laumondii subsp. laumondii (strain DSM 15139 / CIP 105565 / TT01) (Photorhabdus luminescens subsp. laumondii), this protein is Glycine dehydrogenase (decarboxylating).